The following is a 240-amino-acid chain: Biotin--[acetyl-CoA-carboxylase] ligase (240 aa).

The region spanning 1 to 176 (MLARTDSTNA…AFARWQAQLD (176 aa)) is the BPL/LPL catalytic domain. Biotin-binding positions include 7-9 (STN), Q30, 34-36 (RGR), and K102.

The protein belongs to the biotin--protein ligase family.

It carries out the reaction biotin + L-lysyl-[protein] + ATP = N(6)-biotinyl-L-lysyl-[protein] + AMP + diphosphate + H(+). Functionally, activates biotin to form biotinyl-5'-adenylate and transfers the biotin moiety to biotin-accepting proteins. The polypeptide is Biotin--[acetyl-CoA-carboxylase] ligase (birA) (Paracoccus denitrificans).